We begin with the raw amino-acid sequence, 99 residues long: Thylakoid membrane protein ssl2009 (99 aa).

Residues 10 to 30 (GFLLGTVIGGVVGGILGSVLA) form a helical membrane-spanning segment. A coiled-coil region spans residues 50 to 84 (NLDSEENIELARRRLEDKIAQLNLVIDDVRDQLGH).

It is found in the cellular thylakoid membrane. The protein is Thylakoid membrane protein ssl2009 of Synechocystis sp. (strain ATCC 27184 / PCC 6803 / Kazusa).